The primary structure comprises 186 residues: Peptidyl-tRNA hydrolase (186 aa).

Residue tyrosine 13 coordinates tRNA. The active-site Proton acceptor is the histidine 18. Positions 59, 61, and 107 each coordinate tRNA.

Belongs to the PTH family. In terms of assembly, monomer.

It is found in the cytoplasm. The catalysed reaction is an N-acyl-L-alpha-aminoacyl-tRNA + H2O = an N-acyl-L-amino acid + a tRNA + H(+). Its function is as follows. Hydrolyzes ribosome-free peptidyl-tRNAs (with 1 or more amino acids incorporated), which drop off the ribosome during protein synthesis, or as a result of ribosome stalling. In terms of biological role, catalyzes the release of premature peptidyl moieties from peptidyl-tRNA molecules trapped in stalled 50S ribosomal subunits, and thus maintains levels of free tRNAs and 50S ribosomes. The sequence is that of Peptidyl-tRNA hydrolase from Thermotoga sp. (strain RQ2).